The primary structure comprises 286 residues: 3-hydroxyanthranilate 3,4-dioxygenase (286 aa).

The segment at 1–160 (MERCVRVKSW…SEQYRTGKPN (160 aa)) is domain A (catalytic). R43 is a binding site for O2. Fe cation-binding residues include H47, E53, and H91. E53 serves as a coordination point for substrate. Residues R95 and E105 each coordinate substrate. The interval 161–177 (PDQLLKEPPFPLSTRSV) is linker. A domain B region spans residues 178–286 (MEPMSLKAWL…QDPACKKPLG (109 aa)).

This sequence belongs to the 3-HAO family. As to quaternary structure, monomer. It depends on Fe(2+) as a cofactor.

It localises to the cytoplasm. The protein localises to the cytosol. The catalysed reaction is 3-hydroxyanthranilate + O2 = (2Z,4Z)-2-amino-3-carboxymuconate 6-semialdehyde. Its pathway is cofactor biosynthesis; NAD(+) biosynthesis; quinolinate from L-kynurenine: step 3/3. Its function is as follows. Catalyzes the oxidative ring opening of 3-hydroxyanthranilate to 2-amino-3-carboxymuconate semialdehyde, which spontaneously cyclizes to quinolinate. The chain is 3-hydroxyanthranilate 3,4-dioxygenase (Haao) from Rattus norvegicus (Rat).